Here is a 426-residue protein sequence, read N- to C-terminus: MTDTNSQWIEMNLQRQRKMLEDKQKQKRHQSAGSVRTTSTAMSMNSMKDYPTFDNSLPFSISDNSSVSVSMNTPLIPTQDPIAQPRMQSMPRQQPQQVQESLISIGDYPDNDINAKLSKVNLTSCVVSDDEDEDKRSYADSPWNTDVVADRIPSEVLPDYNFIKNNLAKFVEDPAVEHCLYKCSITRQKSGVDKGMFPTYFLHLEEFDTDKRQKIFLLAARKRKKSTTANYLLSTDPTNLSREGEGYCAKVRSNALGTQFTVYDSGQNPKKTTNHAAIRQELAAVIYETNVLGFKGPRKMTIVMPGIEPPTENRPAVRCPVRPIQDKHTLLERYRLNDLDSLKILSNKSPQWNDETQSYVLNFHGRVTQASVKNFQIIHQSSPEYIVMQFGRISDDEFTMDFRYPLSAVQAFGIAMTSFHGKLACE.

The segment at 16–28 is required for localization to cilia in AWB sensory neurons; it reads QRKMLEDKQKQKR. Residues 19-39 form a disordered region; sequence MLEDKQKQKRHQSAGSVRTTS.

The protein belongs to the TUB family. Interacts with rgb-3. In terms of tissue distribution, expressed in ciliated sensory neurons.

Its subcellular location is the cytoplasm. The protein resides in the cell projection. The protein localises to the axon. It is found in the dendrite. It localises to the cilium. Has a role in fat regulation independent of daf-16. Implicated in ciliar sensory function which is required for normal sensory behavior such as chemotaxis. Required for extension and growth of sensory neuronal cilia during postembryonic development, potentially via mediating signaling protein transport and localization of PI(4,5)P2 to the ciliary base. Functions in life span control via the insulin/IGF-1 pathway. Thought to be involved in neuronal trafficking. This is Tubby protein homolog 1 from Caenorhabditis elegans.